The sequence spans 332 residues: N-acetyl-gamma-glutamyl-phosphate reductase (332 aa).

Cysteine 144 is an active-site residue.

This sequence belongs to the NAGSA dehydrogenase family. Type 1 subfamily.

Its subcellular location is the cytoplasm. The catalysed reaction is N-acetyl-L-glutamate 5-semialdehyde + phosphate + NADP(+) = N-acetyl-L-glutamyl 5-phosphate + NADPH + H(+). It participates in amino-acid biosynthesis; L-arginine biosynthesis; N(2)-acetyl-L-ornithine from L-glutamate: step 3/4. Catalyzes the NADPH-dependent reduction of N-acetyl-5-glutamyl phosphate to yield N-acetyl-L-glutamate 5-semialdehyde. This Archaeoglobus fulgidus (strain ATCC 49558 / DSM 4304 / JCM 9628 / NBRC 100126 / VC-16) protein is N-acetyl-gamma-glutamyl-phosphate reductase.